The sequence spans 438 residues: MRNGFGKTLSLGIQHVLAMYAGAIVVPLIVGKAMGLTVEQLTYLVSIDIFMCGVATLLQVWSNRFFGIGLPVVLGCTFTAVSPMIAIGSEYGVSTVYGSIIASGILVILISFFFGKLVSFFPPVVTGSVVTIIGITLMPVAMNNMAGGEGSADFGDLSNLALAFTVLSIIVLLYRFTKGFIKSVSILIGILIGTFIAYFMGKVQFDNVSDAAVVQMIQPFYFGAPSFHAAPIITMSIVAIVSLVESTGVYFALGDLTNRRLTEIDLSKGYRAEGLAVLLGGIFNAFPYTAFSQNVGLVQLTGIKKNAVIVVTGVILMAFGLFPKIAAFTTIIPSAVLGGAMVAMFGMVIAYGIKMLSRIDFAKQENLLIVACSVGLGLGVTVVPDIFKQLPSALTLLTTNGIVAGSFTAVVLNIVYNVFSKAKKIEQEADLAEQKTAV.

The next 13 membrane-spanning stretches (helical) occupy residues 11-31 (LGIQHVLAMYAGAIVVPLIVG), 41-61 (LTYLVSIDIFMCGVATLLQVW), 65-85 (FFGIGLPVVLGCTFTAVSPMI), 100-120 (IIASGILVILISFFFGKLVSF), 121-141 (FPPVVTGSVVTIIGITLMPVA), 154-174 (FGDLSNLALAFTVLSIIVLLY), 180-200 (FIKSVSILIGILIGTFIAYFM), 220-240 (FYFGAPSFHAAPIITMSIVAI), 272-292 (AEGLAVLLGGIFNAFPYTAFS), 308-328 (VIVVTGVILMAFGLFPKIAAF), 331-351 (IIPSAVLGGAMVAMFGMVIAY), 367-387 (LLIVACSVGLGLGVTVVPDIF), and 396-416 (LLTTNGIVAGSFTAVVLNIVY).

It belongs to the nucleobase:cation symporter-2 (NCS2) (TC 2.A.40) family.

Its subcellular location is the cell membrane. In terms of biological role, transport of xanthine in the cell. This chain is Xanthine permease (pbuX), found in Bacillus subtilis (strain 168).